Here is a 484-residue protein sequence, read N- to C-terminus: MDFRILATSTSSLSKVSADALLIVVAGDPKQQGLDDPLDRVLSDAIAAGDLAFKAGRTLYLHRPLGVKAARVVFAVAGDAGPKAFKSAVAAGLGLIKPLGVKHLAVAASGAIEDSHAEAAAAAASDATYSYRHTKPSASPAPALQKITLLVDKAEAKAAQTGLSRGAAIALGVALARECANRPGNHCTPSFLAAEARKLAKLPRIKVDVLDRKACEKLGMGSFLAVAQGSDEPPKFIVLRYDGASRSDAPVVLVGKGITFDTGGISIKPAAEMDEMKYDMGGAASVLGSFRAVAELQPQVNVVGLIPSCENMPSGRAIKPGDVVTSMSGQTIEVLNTDAEGRLILCDALTYAERFKPAVVIDIATLTGACVIALGHHRSGLFSADDALADALLDAGSAGLDPAWRMPLDDEYEEALRSNFADMGNVGGRAGGAITAAMFLKKFTAKYRWAHLDIAGTAWKSGAAKGATGRPVPLLTHFVLSRTR.

Residues Lys256 and Asp261 each coordinate Mn(2+). Lys268 is an active-site residue. Asp279, Asp338, and Glu340 together coordinate Mn(2+). Arg342 is an active-site residue.

This sequence belongs to the peptidase M17 family. The cofactor is Mn(2+).

It is found in the cytoplasm. It carries out the reaction Release of an N-terminal amino acid, Xaa-|-Yaa-, in which Xaa is preferably Leu, but may be other amino acids including Pro although not Arg or Lys, and Yaa may be Pro. Amino acid amides and methyl esters are also readily hydrolyzed, but rates on arylamides are exceedingly low.. The catalysed reaction is Release of an N-terminal amino acid, preferentially leucine, but not glutamic or aspartic acids.. Functionally, presumably involved in the processing and regular turnover of intracellular proteins. Catalyzes the removal of unsubstituted N-terminal amino acids from various peptides. This Methylibium petroleiphilum (strain ATCC BAA-1232 / LMG 22953 / PM1) protein is Probable cytosol aminopeptidase.